The primary structure comprises 1342 residues: Receptor tyrosine-protein kinase erbB-3 (1342 aa).

The signal sequence occupies residues 1 to 19 (MRANDALQVLGLLFSLARG). The Extracellular portion of the chain corresponds to 20–643 (SEVGNSQAVC…LVLIGKTHLT (624 aa)). Cysteines 29 and 56 form a disulfide. Asn126 carries an N-linked (GlcNAc...) asparagine glycan. Cystine bridges form between Cys156–Cys183, Cys186–Cys194, Cys190–Cys202, Cys210–Cys218, Cys214–Cys226, Cys227–Cys235, Cys231–Cys243, Cys246–Cys255, Cys259–Cys286, Cys290–Cys301, Cys305–Cys320, and Cys323–Cys327. N-linked (GlcNAc...) asparagine glycosylation occurs at Asn250. N-linked (GlcNAc...) asparagine glycosylation is found at Asn353, Asn408, Asn414, Asn437, and Asn469. 10 cysteine pairs are disulfide-bonded: Cys500–Cys509, Cys504–Cys517, Cys520–Cys529, Cys533–Cys549, Cys552–Cys565, Cys556–Cys573, Cys576–Cys585, Cys589–Cys610, Cys613–Cys621, and Cys617–Cys629. The N-linked (GlcNAc...) asparagine glycan is linked to Asn522. Residue Asn566 is glycosylated (N-linked (GlcNAc...) asparagine). Residue Asn616 is glycosylated (N-linked (GlcNAc...) asparagine). A helical membrane pass occupies residues 644–664 (MALTVIAGLVVIFMMLGGTFL). At 665-1342 (YWRGRRIQNK…LFPKANAQRT (678 aa)) the chain is on the cytoplasmic side. Ser686 carries the post-translational modification Phosphoserine. The Protein kinase domain maps to 709–966 (LRKLKVLGSG…TFKELANEFT (258 aa)). ATP contacts are provided by residues 715 to 723 (LGSGVFGTV), Lys742, 788 to 790 (QYL), and 834 to 839 (NLAARN). The active-site Proton acceptor is Asn834. Disordered regions lie at residues 980–999 (RESG…TNKK) and 1033–1152 (LPVG…PGLE). Ser982 carries the post-translational modification Phosphoserine. Over residues 1042–1075 (RGSQSLLSPSSGYMPMNQGNLGESCQESAVSGSS) the composition is skewed to polar residues.

It belongs to the protein kinase superfamily. Tyr protein kinase family. EGF receptor subfamily. In terms of assembly, monomer and homodimer. Heterodimer with each of the other ERBB receptors (Potential). Interacts with CSPG5. Interacts with GRB7. Interacts with MUC1. Interacts with MYOC. Interacts with isoform 2 of PA2G4. Found in a ternary complex with NRG1 and ITGAV:ITGB3 or ITGA6:ITGB4. In terms of processing, autophosphorylated. Ligand-binding increases phosphorylation on tyrosine residues and promotes its association with the p85 subunit of phosphatidylinositol 3-kinase. As to expression, epithelial tissues and brain.

It is found in the cell membrane. The protein localises to the secreted. The enzyme catalyses L-tyrosyl-[protein] + ATP = O-phospho-L-tyrosyl-[protein] + ADP + H(+). Functionally, tyrosine-protein kinase that plays an essential role as cell surface receptor for neuregulins. Binds to neuregulin-1 (NRG1) and is activated by it; ligand-binding increases phosphorylation on tyrosine residues and promotes its association with the p85 subunit of phosphatidylinositol 3-kinase. May also be activated by CSPG5. Involved in the regulation of myeloid cell differentiation. The polypeptide is Receptor tyrosine-protein kinase erbB-3 (ERBB3) (Homo sapiens (Human)).